The chain runs to 402 residues: Subtilisin-like protease 9 (402 aa).

A signal peptide spans 1–20; sequence MGFFRQLFSLSLCALSLAIP. A propeptide spanning residues 21–120 is cleaved from the precursor; it reads SKLIGLENTQ…VEVDRVVKLD (100 aa). In terms of domain architecture, Inhibitor I9 spans 36–119; it reads SYIVVMKSTI…YVEVDRVVKL (84 aa). Positions 130–402 constitute a Peptidase S8 domain; sequence SWGLGRISHK…RKLLYNGSGA (273 aa). Active-site charge relay system residues include aspartate 162 and histidine 193. A glycan (N-linked (GlcNAc...) asparagine) is linked at asparagine 254. The active-site Charge relay system is the serine 348. 2 N-linked (GlcNAc...) asparagine glycosylation sites follow: asparagine 390 and asparagine 398.

It belongs to the peptidase S8 family.

Its subcellular location is the secreted. Its function is as follows. Secreted subtilisin-like serine protease with keratinolytic activity that contributes to pathogenicity. This is Subtilisin-like protease 9 (SUB9) from Arthroderma benhamiae (strain ATCC MYA-4681 / CBS 112371) (Trichophyton mentagrophytes).